The following is a 554-amino-acid chain: Urocanate hydratase (554 aa).

Residues 51-52 (GG), glutamine 129, 175-177 (GMG), glutamate 195, 241-242 (NA), 262-266 (QTSAH), 272-273 (YL), and tyrosine 321 each bind NAD(+). Cysteine 409 is an active-site residue. Glycine 491 lines the NAD(+) pocket.

It belongs to the urocanase family. Requires NAD(+) as cofactor.

The protein localises to the cytoplasm. The catalysed reaction is 4-imidazolone-5-propanoate = trans-urocanate + H2O. Its pathway is amino-acid degradation; L-histidine degradation into L-glutamate; N-formimidoyl-L-glutamate from L-histidine: step 2/3. Functionally, catalyzes the conversion of urocanate to 4-imidazolone-5-propionate. The chain is Urocanate hydratase from Methylobacterium nodulans (strain LMG 21967 / CNCM I-2342 / ORS 2060).